The following is a 354-amino-acid chain: MRVHEEASEDKEREVEEAPDLMPLSPPPTAAATAAVVAVAGQRLVVGYALTKKKVKSFLQPKLLSLARKKSIHFVSIDETRPLSEQGPFDIILHKLTDKEWQQVLEDYREEHPEVTVLDPPNAIQHLHNRQSMLQEVADLNLSNAYGEVCTPRQLVIMKDPLSIPSAVAKAGLTLPLVAKPLVVDGTSKSHELSLAYVETSLSMLDPPLVLQEFVNHGGILFKVYVVGETIRVVRRFSLPDVNIYDLENNDGIFRFPRVSCATNTAEDAEVDPSIAELPPKPLLEKLGRELRRRLGLRLFNFDMIREHGRKDRYYVIDINYFPGYGKMPGYEHIFIDFLLSLVQNKYKRRLSGS.

Residues 1-16 (MRVHEEASEDKEREVE) are compositionally biased toward basic and acidic residues. The interval 1-24 (MRVHEEASEDKEREVEEAPDLMPL) is disordered. 1D-myo-inositol 1,3,4-trisphosphate contacts are provided by Lys-53 and Lys-95. ATP contacts are provided by Arg-130 and Lys-180. The ATP-grasp domain maps to 140–347 (LNLSNAYGEV…FLLSLVQNKY (208 aa)). 1D-myo-inositol 1,3,4-trisphosphate-binding residues include His-191 and Lys-223. ATP-binding positions include 212–223 (QEFVNHGGILFK) and Ser-238. Residues Asp-303, Asp-318, and Asn-320 each contribute to the Mg(2+) site. Asn-320 lines the 1D-myo-inositol 1,3,4-trisphosphate pocket.

Belongs to the ITPK1 family. Monomer. The cofactor is Mg(2+).

The enzyme catalyses 1D-myo-inositol 3,4,5,6-tetrakisphosphate + ATP = 1D-myo-inositol 1,3,4,5,6-pentakisphosphate + ADP + H(+). It carries out the reaction 1D-myo-inositol 1,3,4-trisphosphate + ATP = 1D-myo-inositol 1,3,4,5-tetrakisphosphate + ADP + H(+). It catalyses the reaction 1D-myo-inositol 1,3,4-trisphosphate + ATP = 1D-myo-inositol 1,3,4,6-tetrakisphosphate + ADP + H(+). Functionally, kinase that can phosphorylate various inositol polyphosphate such as Ins(3,4,5,6)P4 or Ins(1,3,4)P3 and participates in phytic acid biosynthesis in developing seeds. Phytic acid is the primary storage form of phosphorus in cereal grains and other plant seeds. This is Inositol-tetrakisphosphate 1-kinase 1 (ITPK1) from Oryza sativa subsp. indica (Rice).